Consider the following 304-residue polypeptide: Splicing factor U2af small subunit B (304 aa).

The segment at 12 to 40 (EKDRVNCPFYFKIGACRHGDRCSRLHNRP) adopts a C3H1-type 1 zinc-finger fold. Residues 44–146 (PTIVLANMYQ…RPIIVEYSPV (103 aa)) form the RRM domain. A C3H1-type 2 zinc finger spans residues 148–175 (DFREATCRQFEENSCNRGGYCNFMHVKQ). Positions 184 to 207 (LYGGRSRRSHGRSRSPSPRHRRGN) are enriched in basic residues. The tract at residues 184–304 (LYGGRSRRSH…QWNREREEKP (121 aa)) is disordered. Residues 208-220 (RDRDDFRRERDGY) show a composition bias toward basic and acidic residues. Residues 221 to 258 (RGGGDGYRGGGGGGGGDGYRGGDSYRGGGGGGRRGGGS) are compositionally biased toward gly residues. Over residues 268–280 (RRRHGSPPRRARS) the composition is skewed to basic residues. Over residues 281-304 (PVRESSEERRAKIEQWNREREEKP) the composition is skewed to basic and acidic residues.

It belongs to the splicing factor SR family.

The protein localises to the nucleus. Its function is as follows. Necessary for the splicing of pre-mRNA. The chain is Splicing factor U2af small subunit B (U2AF35B) from Oryza sativa subsp. japonica (Rice).